Consider the following 363-residue polypeptide: MKIGVFVPIGNNGWLISTHAPQYMPTFELNKAIVQKAEHYHFDFALSMIKLRGFGGKTEFWDHNLESFTLMAGLAAVTSRIQIYATAATLTLPPAIVARMAATIDSISGGRFGVNLVTGWQKPEYEQMGIWPGDDYFSRRYDYLTEYVQVLRDLWGTGKSDFKGDFFTMNDCRVSPQPSVPMKVICAGQSDAGMAFSAQYADFNFCFGKGVNTPTAFAPTAARMKQAAEQTGRDVGSYVLFMVIADETDDAARTKWEHYKAGADEEALSWLTEQSQKDTRSGTDTNVRQMADPTSAVNINMGTLVGSYASVARMLDEVASVPGAEGVLLTFDDFLSGIETFGERIQPLMQCRAHLPTLTQEVA.

FMN-binding positions include 49 to 50, Asn115, Glu124, 140 to 141, and Ser190; these read IK and RY.

It belongs to the NtaA/SnaA/DszA monooxygenase family. RutA subfamily.

It catalyses the reaction uracil + FMNH2 + NADH + O2 = (Z)-3-ureidoacrylate + FMN + NAD(+) + H2O + H(+). It carries out the reaction thymine + FMNH2 + NADH + O2 = (Z)-2-methylureidoacrylate + FMN + NAD(+) + H2O + H(+). In terms of biological role, catalyzes the pyrimidine ring opening between N-3 and C-4 by an unusual flavin hydroperoxide-catalyzed mechanism, adding oxygen atoms in the process to yield ureidoacrylate peracid, that immediately reacts with FMN forming ureidoacrylate and FMN-N(5)-oxide. The FMN-N(5)-oxide reacts spontaneously with NADH to produce FMN. Requires the flavin reductase RutF to regenerate FMN in vivo. The sequence is that of Pyrimidine monooxygenase RutA from Escherichia coli O44:H18 (strain 042 / EAEC).